A 243-amino-acid polypeptide reads, in one-letter code: Pyridoxine 5'-phosphate synthase (243 aa).

Asn9 contacts 3-amino-2-oxopropyl phosphate. 1-deoxy-D-xylulose 5-phosphate is bound at residue 11 to 12; it reads DH. Arg20 contacts 3-amino-2-oxopropyl phosphate. His45 acts as the Proton acceptor in catalysis. 1-deoxy-D-xylulose 5-phosphate is bound by residues Arg47 and His52. Glu72 (proton acceptor) is an active-site residue. Thr102 provides a ligand contact to 1-deoxy-D-xylulose 5-phosphate. Residue His193 is the Proton donor of the active site. Residues Gly194 and 215-216 each bind 3-amino-2-oxopropyl phosphate; that span reads GH.

It belongs to the PNP synthase family. As to quaternary structure, homooctamer; tetramer of dimers.

The protein localises to the cytoplasm. It catalyses the reaction 3-amino-2-oxopropyl phosphate + 1-deoxy-D-xylulose 5-phosphate = pyridoxine 5'-phosphate + phosphate + 2 H2O + H(+). It functions in the pathway cofactor biosynthesis; pyridoxine 5'-phosphate biosynthesis; pyridoxine 5'-phosphate from D-erythrose 4-phosphate: step 5/5. Catalyzes the complicated ring closure reaction between the two acyclic compounds 1-deoxy-D-xylulose-5-phosphate (DXP) and 3-amino-2-oxopropyl phosphate (1-amino-acetone-3-phosphate or AAP) to form pyridoxine 5'-phosphate (PNP) and inorganic phosphate. The polypeptide is Pyridoxine 5'-phosphate synthase (Escherichia coli O157:H7).